Reading from the N-terminus, the 478-residue chain is Ankyrin repeat and BTB/POZ domain-containing protein 1 (478 aa).

ANK repeat units follow at residues 1-31 and 35-64; these read MDTS…EVNV and WDST…RCEA. BTB domains follow at residues 115–182 and 272–346; these read SDVV…DIGV and PDIC…ELPP. A coiled-coil region spans residues 451-477; the sequence is VQTYSAIEEAQQRLRALEDLLVSIGLD.

The protein localises to the cytoplasm. In terms of biological role, may act as a mediator of the PTEN growth-suppressive signaling pathway. May play a role in developmental processes. The chain is Ankyrin repeat and BTB/POZ domain-containing protein 1 from Mus musculus (Mouse).